The chain runs to 417 residues: Serpin H1 (417 aa).

Residues 1-17 (MRSLLLGTLCLLAVALA) form the signal peptide. At Lys-93 the chain carries N6-succinyllysine. Asn-119 and Asn-124 each carry an N-linked (GlcNAc...) asparagine glycan. Ser-140 carries the phosphoserine modification. N6-acetyllysine is present on Lys-206. N6-succinyllysine is present on Lys-295. Lys-318 bears the N6-acetyllysine mark. N-linked (GlcNAc...) asparagine glycosylation occurs at Asn-394. The Prevents secretion from ER signature appears at 414–417 (RDEL).

This sequence belongs to the serpin family.

The protein localises to the endoplasmic reticulum lumen. Its function is as follows. Binds specifically to collagen. Could be involved as a chaperone in the biosynthetic pathway of collagen. The polypeptide is Serpin H1 (Serpinh1) (Rattus norvegicus (Rat)).